A 496-amino-acid polypeptide reads, in one-letter code: Probable cytosol aminopeptidase (496 aa).

Positions 266 and 271 each coordinate Mn(2+). K278 is a catalytic residue. Mn(2+)-binding residues include D289, D348, and E350. Residue R352 is part of the active site.

This sequence belongs to the peptidase M17 family. Mn(2+) serves as cofactor.

Its subcellular location is the cytoplasm. The enzyme catalyses Release of an N-terminal amino acid, Xaa-|-Yaa-, in which Xaa is preferably Leu, but may be other amino acids including Pro although not Arg or Lys, and Yaa may be Pro. Amino acid amides and methyl esters are also readily hydrolyzed, but rates on arylamides are exceedingly low.. The catalysed reaction is Release of an N-terminal amino acid, preferentially leucine, but not glutamic or aspartic acids.. In terms of biological role, presumably involved in the processing and regular turnover of intracellular proteins. Catalyzes the removal of unsubstituted N-terminal amino acids from various peptides. This chain is Probable cytosol aminopeptidase, found in Pseudomonas syringae pv. syringae (strain B728a).